The primary structure comprises 155 residues: Rusticyanin (155 aa).

The region spanning 53–155 (SFEVHDKKNP…TGMFGKIIVK (103 aa)) is the Plastocyanin-like domain. Residues histidine 85, cysteine 138, histidine 143, and methionine 148 each contribute to the Cu cation site.

As to quaternary structure, monomer. It depends on Cu cation as a cofactor.

The protein localises to the periplasm. In terms of biological role, electron carrier from cytochrome c552 to the A-type oxidase. This is Rusticyanin (rus) from Acidithiobacillus ferrooxidans (Thiobacillus ferrooxidans).